The chain runs to 843 residues: Protein P (843 aa).

Residues Met1–Gln177 are terminal protein domain (TP). The tract at residues Asp178 to Ile346 is spacer. A disordered region spans residues Arg219–Ser250. Over residues Leu223–Arg235 the composition is skewed to low complexity. The polymerase/reverse transcriptase domain (RT) stretch occupies residues Glu347–Gln690. A Reverse transcriptase domain is found at Glu357–Ile600. Residues Asp429, Asp551, and Asp552 each contribute to the Mg(2+) site.

The protein belongs to the hepadnaviridae P protein family.

It catalyses the reaction DNA(n) + a 2'-deoxyribonucleoside 5'-triphosphate = DNA(n+1) + diphosphate. The catalysed reaction is Endonucleolytic cleavage to 5'-phosphomonoester.. Activated by host HSP70 and HSP40 in vitro to be able to bind the epsilon loop of the pgRNA. Because deletion of the RNase H region renders the protein partly chaperone-independent, the chaperones may be needed indirectly to relieve occlusion of the RNA-binding site by this domain. Inhibited by several reverse-transcriptase inhibitors: Lamivudine, Adefovir and Entecavir. Multifunctional enzyme that converts the viral RNA genome into dsDNA in viral cytoplasmic capsids. This enzyme displays a DNA polymerase activity that can copy either DNA or RNA templates, and a ribonuclease H (RNase H) activity that cleaves the RNA strand of RNA-DNA heteroduplexes in a partially processive 3'- to 5'-endonucleasic mode. Neo-synthesized pregenomic RNA (pgRNA) are encapsidated together with the P protein, and reverse-transcribed inside the nucleocapsid. Initiation of reverse-transcription occurs first by binding the epsilon loop on the pgRNA genome, and is initiated by protein priming, thereby the 5'-end of (-)DNA is covalently linked to P protein. Partial (+)DNA is synthesized from the (-)DNA template and generates the relaxed circular DNA (RC-DNA) genome. After budding and infection, the RC-DNA migrates in the nucleus, and is converted into a plasmid-like covalently closed circular DNA (cccDNA). The activity of P protein does not seem to be necessary for cccDNA generation, and is presumably released from (+)DNA by host nuclear DNA repair machinery. This chain is Protein P, found in Hepatitis B virus genotype B2 (isolate Vietnam/16091/1992) (HBV-B).